A 118-amino-acid polypeptide reads, in one-letter code: uncharacterized protein (118 aa).

The first 22 residues, 1–22 (MKMSYLRSGIVGFLAGASLSYA), serve as a signal peptide directing secretion. Positions 41–71 (TATEALETDKQLYKKIEKKIEELESSCVKKS) form a coiled coil.

This is an uncharacterized protein from Schizosaccharomyces pombe (strain 972 / ATCC 24843) (Fission yeast).